The primary structure comprises 218 residues: Thiopurine S-methyltransferase (218 aa).

Residues W10, L45, E66, and R123 each contribute to the S-adenosyl-L-methionine site.

This sequence belongs to the class I-like SAM-binding methyltransferase superfamily. TPMT family.

The protein localises to the cytoplasm. The catalysed reaction is S-adenosyl-L-methionine + a thiopurine = S-adenosyl-L-homocysteine + a thiopurine S-methylether.. The protein is Thiopurine S-methyltransferase of Azotobacter vinelandii (strain DJ / ATCC BAA-1303).